The chain runs to 360 residues: Phenylalanine--tRNA ligase alpha subunit (360 aa).

Glu-260 lines the Mg(2+) pocket.

It belongs to the class-II aminoacyl-tRNA synthetase family. Phe-tRNA synthetase alpha subunit type 1 subfamily. As to quaternary structure, tetramer of two alpha and two beta subunits. Mg(2+) serves as cofactor.

Its subcellular location is the cytoplasm. It catalyses the reaction tRNA(Phe) + L-phenylalanine + ATP = L-phenylalanyl-tRNA(Phe) + AMP + diphosphate + H(+). In Bradyrhizobium diazoefficiens (strain JCM 10833 / BCRC 13528 / IAM 13628 / NBRC 14792 / USDA 110), this protein is Phenylalanine--tRNA ligase alpha subunit.